The primary structure comprises 382 residues: Pentraxin-related protein PTX3 (382 aa).

A signal peptide spans 1–17 (MHISVILFCALWSAVSA). Residues 79-137 (VMLRGELQKLQAELGRLEGSLQKLCGPEAPSETRLARALDDLLQASRDAGRRLARLEDA) adopt a coiled-coil conformation. Intrachain disulfides connect C180/C358 and C211/C272. The Pentraxin (PTX) domain maps to 180 to 382 (CETAILFPMR…QPHGGAQYVY (203 aa)). N-linked (GlcNAc...) asparagine glycosylation occurs at N221.

As to quaternary structure, homooctamer; disulfide-linked. Binds to C1q.

It localises to the secreted. Its function is as follows. Plays a role in the regulation of innate resistance to pathogens, inflammatory reactions, possibly clearance of self-components and female fertility. The sequence is that of Pentraxin-related protein PTX3 (PTX3) from Bos taurus (Bovine).